Here is a 159-residue protein sequence, read N- to C-terminus: Ascorbate-specific PTS system EIIA component (159 aa).

Residues 9–152 (VLKQHHTVRL…TSLFAVIDRV (144 aa)) form the PTS EIIA type-2 domain. The Tele-phosphohistidine intermediate role is filled by histidine 71. Phosphohistidine is present on histidine 71.

The protein localises to the cytoplasm. Functionally, the phosphoenolpyruvate-dependent sugar phosphotransferase system (sugar PTS), a major carbohydrate active transport system, catalyzes the phosphorylation of incoming sugar substrates concomitantly with their translocation across the cell membrane. The enzyme II UlaABC PTS system is involved in ascorbate transport. The polypeptide is Ascorbate-specific PTS system EIIA component (ulaC) (Mycoplasma pneumoniae (strain ATCC 29342 / M129 / Subtype 1) (Mycoplasmoides pneumoniae)).